The sequence spans 156 residues: MIDLPFLLAEEIEGGLFDFNGTLPLMALQFLTLMVLLNTIFYKPVTKVLDERDEYIRTTLTTASSMLVKADELAAKYEEDLSEARRNAQLKIASSQKEAQNIVSEDIKKAQLNAEKLIAEASKQLNVQKEEALKTLENQVDTLSDQIKVKLLSSQS.

A helical membrane pass occupies residues 20–42; the sequence is NGTLPLMALQFLTLMVLLNTIFY.

The protein belongs to the ATPase B chain family. F-type ATPases have 2 components, F(1) - the catalytic core - and F(0) - the membrane proton channel. F(1) has five subunits: alpha(3), beta(3), gamma(1), delta(1), epsilon(1). F(0) has four main subunits: a(1), b(1), b'(1) and c(10-14). The alpha and beta chains form an alternating ring which encloses part of the gamma chain. F(1) is attached to F(0) by a central stalk formed by the gamma and epsilon chains, while a peripheral stalk is formed by the delta, b and b' chains.

It localises to the plastid. The protein localises to the chloroplast thylakoid membrane. Its function is as follows. F(1)F(0) ATP synthase produces ATP from ADP in the presence of a proton or sodium gradient. F-type ATPases consist of two structural domains, F(1) containing the extramembraneous catalytic core and F(0) containing the membrane proton channel, linked together by a central stalk and a peripheral stalk. During catalysis, ATP synthesis in the catalytic domain of F(1) is coupled via a rotary mechanism of the central stalk subunits to proton translocation. Functionally, component of the F(0) channel, it forms part of the peripheral stalk, linking F(1) to F(0). The b'-subunit is a diverged and duplicated form of b found in plants and photosynthetic bacteria. The sequence is that of ATP synthase subunit b', chloroplastic from Pyropia yezoensis (Susabi-nori).